The following is a 360-amino-acid chain: Histidinol-phosphate aminotransferase (360 aa).

N6-(pyridoxal phosphate)lysine is present on Lys223.

This sequence belongs to the class-II pyridoxal-phosphate-dependent aminotransferase family. Histidinol-phosphate aminotransferase subfamily. Homodimer. It depends on pyridoxal 5'-phosphate as a cofactor.

It carries out the reaction L-histidinol phosphate + 2-oxoglutarate = 3-(imidazol-4-yl)-2-oxopropyl phosphate + L-glutamate. It functions in the pathway amino-acid biosynthesis; L-histidine biosynthesis; L-histidine from 5-phospho-alpha-D-ribose 1-diphosphate: step 7/9. This is Histidinol-phosphate aminotransferase from Bacillus velezensis (strain DSM 23117 / BGSC 10A6 / LMG 26770 / FZB42) (Bacillus amyloliquefaciens subsp. plantarum).